Here is a 281-residue protein sequence, read N- to C-terminus: GPN-loop GTPase 3 (281 aa).

13-18 (GSGKST) is a binding site for GTP. The Gly-Pro-Asn (GPN)-loop; involved in dimer interface signature appears at 70–72 (GPN). Residue 173-176 (SKMD) participates in GTP binding. Positions 259–281 (VQYGEDEEPKEPKDMDEGDFTAQ) are disordered.

The protein belongs to the GPN-loop GTPase family. Heterodimers with GPN1 or GPN2. Binds to RNA polymerase II (RNAPII).

Small GTPase required for proper nuclear import of RNA polymerase II and III (RNAPII and RNAPIII). May act at an RNAP assembly step prior to nuclear import. The chain is GPN-loop GTPase 3 from Mycosarcoma maydis (Corn smut fungus).